The sequence spans 426 residues: Dihydroorotase (426 aa).

Zn(2+)-binding residues include His58 and His60. Substrate is bound by residues 60-62 and Asn92; that span reads HLR. Positions 150, 177, and 230 each coordinate Zn(2+). Asn276 contacts substrate. Asp303 serves as a coordination point for Zn(2+). Asp303 is an active-site residue. Substrate contacts are provided by residues His307 and 321-322; that span reads FG.

It belongs to the metallo-dependent hydrolases superfamily. DHOase family. Class I DHOase subfamily. It depends on Zn(2+) as a cofactor.

The enzyme catalyses (S)-dihydroorotate + H2O = N-carbamoyl-L-aspartate + H(+). The protein operates within pyrimidine metabolism; UMP biosynthesis via de novo pathway; (S)-dihydroorotate from bicarbonate: step 3/3. Catalyzes the reversible cyclization of carbamoyl aspartate to dihydroorotate. This chain is Dihydroorotase, found in Listeria monocytogenes serotype 4a (strain HCC23).